The primary structure comprises 1348 residues: Vascular endothelial growth factor receptor 2 (1348 aa).

A signal peptide spans 1 to 20 (MELGPLRVLTVLLCLAPVFA). The Extracellular segment spans residues 21–756 (GLFISMDQPT…GAEEKTNLEL (736 aa)). N-linked (GlcNAc...) asparagine glycans are attached at residues Asn43, Asn47, Asn63, Asn93, Asn138, Asn153, Asn201, Asn240, Asn290, Asn310, Asn365, Asn386, Asn513, Asn556, Asn603, Asn613, Asn622, Asn666, Asn688, and Asn710. 7 Ig-like C2-type domains span residues 43–106 (NDTL…GDSQ), 138–202 (NKTV…IDNE), 220–312 (DLTM…KNSS), 320–405 (PFIH…HTFT), 412–534 (PQIG…RVIS), 540–651 (GLEI…KHLT), and 658–744 (PRLV…AFFS). Cys50 and Cys100 are oxidised to a cystine. Cys145 and Cys195 are joined by a disulfide. Cysteines 241 and 299 form a disulfide. A disulfide bond links Cys436 and Cys520. Residues Cys561 and Cys633 are joined by a disulfide bond. Cys679 and Cys728 form a disulfide bridge. The chain crosses the membrane as a helical span at residues 757–777 (IILVGTAVIAMFFWLLLVIIL). At 778–1348 (RTVKRANGGD…SPAPVASLPL (571 aa)) the chain is on the cytoplasmic side. The Protein kinase domain occupies 825–1155 (LKLGKPLGRG…FSELVEHLGN (331 aa)). ATP-binding positions include 831 to 839 (LGRGAFGQV) and Lys859. Positions 958–967 (ITSSQSSTSS) are enriched in low complexity. Residues 958-983 (ITSSQSSTSSGFVEERSLSDVEEEDA) form a disordered region. Residue Asp1021 is the Proton acceptor of the active site. Phosphotyrosine; by autocatalysis occurs at positions 1047, 1052, 1168, and 1207. The tract at residues 1280-1302 (PSKSNESVMSEASNQTSGYQSGY) is disordered.

It belongs to the protein kinase superfamily. Tyr protein kinase family. CSF-1/PDGF receptor subfamily. Post-translationally, autophosphorylated on tyrosine residues upon ligand binding. Autophosphorylation occurs in trans, i.e. one subunit of the dimeric receptor phosphorylates tyrosine residues on the other subunit. As to expression, in all endothelial tissues during onset of vascularization. In later development, present in lung, heart, intestine and skin.

It is found in the cell membrane. It localises to the cytoplasmic vesicle. The protein localises to the early endosome. Its subcellular location is the cell junction. The protein resides in the endoplasmic reticulum. The catalysed reaction is L-tyrosyl-[protein] + ATP = O-phospho-L-tyrosyl-[protein] + ADP + H(+). Present in an inactive conformation in the absence of bound ligand. Binding of VEGFA, VEGFC or VEGFD leads to dimerization and activation by autophosphorylation on tyrosine residues. In terms of biological role, tyrosine-protein kinase that acts as a cell-surface receptor for VEGFA, VEGFC and/or VEGFD and plays an essential role in the regulation of angiogenesis and vascular development. Promotes proliferation, survival, migration and differentiation of endothelial cells. Promotes reorganization of the actin cytoskeleton. Binding of vascular growth factors leads to the activation of several signaling cascades. Activation of PLCG1 leads to the production of the cellular signaling molecules diacylglycerol and inositol 1,4,5-trisphosphate and the activation of protein kinase C. Mediates activation of MAPK1/ERK2, MAPK3/ERK1 and the MAP kinase signaling pathway, as well as of the AKT1 signaling pathway. Mediates phosphorylation of PIK3R1, the regulatory subunit of phosphatidylinositol 3-kinase, reorganization of the actin cytoskeleton and activation of PTK2/FAK1. Required for VEGFA-mediated induction of NOS2 and NOS3, leading to the production of the signaling molecule nitric oxide (NO) by endothelial cells. The sequence is that of Vascular endothelial growth factor receptor 2 from Coturnix japonica (Japanese quail).